Consider the following 253-residue polypeptide: Sulfate transporter CysZ (253 aa).

4 consecutive transmembrane segments (helical) span residues 31–51, 72–92, 151–171, and 222–242; these read FVILPLLVNIVLMGGAFWWLF, LSYLLWPIAVISVLLVFGYFF, IVLLILYFIPGIGQTIAPVLW, and IPVLNLFIMPVAVCGATAMWV.

This sequence belongs to the CysZ family.

It localises to the cell inner membrane. In terms of biological role, possibly involved in sulfate transport. Functionally, high affinity, high specificity proton-dependent sulfate transporter, which mediates sulfate uptake. Provides the sulfur source for the cysteine synthesis pathway. The sequence is that of Sulfate transporter CysZ from Salmonella typhimurium (strain LT2 / SGSC1412 / ATCC 700720).